A 1611-amino-acid polypeptide reads, in one-letter code: DNA (cytosine-5)-methyltransferase 1 (1611 aa).

Residues 1–120 (MPARTAPARV…SQTSGEDCRV (120 aa)) form an interaction with DMAP1 region. The interval 1 to 148 (MPARTAPARV…RRSKSDGETK (148 aa)) is interaction with DNMT3A. 2 interaction with the PRC2/EED-EZH2 complex regions span residues 1 to 334 (MPAR…TEKK) and 306 to 603 (KPQV…TIRQ). S15 bears the Phosphoserine mark. In terms of domain architecture, DMAP1-binding spans 16 to 109 (RAFSLPDDVR…SREANGCLEN (94 aa)). An N6,N6-dimethyllysine; by EHMT2 modification is found at K70. The disordered stretch occupies residues 123–328 (AEKGKPPKPV…EEKRRRTTYR (206 aa)). S133 carries the phosphoserine modification. Position 137 is a phosphothreonine (T137). S141 is subject to Phosphoserine. N6-methyllysine; by SETD7 is present on K142. S143 carries the post-translational modification Phosphoserine; by PKB/AKT1. Residues 149-216 (SEVSSSPRIT…TSRERVAGLL (68 aa)) are interaction with DNMT3B. 2 positions are modified to phosphoserine: S152 and S154. K160 is subject to N6-acetyllysine. The interaction with PCNA stretch occupies residues 163–174 (RQTTITSHFPRG). Over residues 163–174 (RQTTITSHFPRG) the composition is skewed to low complexity. Phosphothreonine is present on T166. The short motif at 177–204 (KRKPEEEPEKVKSDDSVDEEKDQEEKRR) is the Nuclear localization signal element. Basic and acidic residues-rich tracts occupy residues 178 to 191 (RKPE…KSDD), 199 to 212 (QEEK…RERV), 220 to 265 (EPGR…RDVR), 279 to 311 (KDEK…QVSD), and 319 to 328 (EEKRRRTTYR). Position 188 is an N6-acetyllysine (K188). K257 is modified (N6-acetyllysine; alternate). Residue K257 forms a Glycyl lysine isopeptide (Lys-Gly) (interchain with G-Cter in SUMO2); alternate linkage. S310 carries the phosphoserine modification. The segment at 329–548 (ELTEKKMTRT…NLNRFTEDSL (220 aa)) is DNA replication foci-targeting sequence. Positions 351 and 354 each coordinate Zn(2+). Phosphoserine occurs at positions 392 and 396. The Zn(2+) site is built by C412 and H416. Phosphoserine occurs at positions 507 and 547. A disordered region spans residues 594-614 (RAERRQTIRQPAKEKDKGPTK). The segment at 643–689 (NAFKRRRCGVCEICQQPECGKCKACKDMVKFGGSGRSKQACQKRRCP) adopts a CXXC-type zinc-finger fold. Residues C650, C653, C656, C661, C664, C667, C683, and C688 each coordinate Zn(2+). The segment at 690–751 (NMAMKEADDD…SYYKKVCIDS (62 aa)) is autoinhibitory linker. A disordered region spans residues 695 to 726 (EADDDEEVDDNIPEMPSPKKMHQGKKKKQNKN). Residues 696-706 (ADDDEEVDDNI) show a composition bias toward acidic residues. S711 carries the post-translational modification Phosphoserine. Residues 713–725 (KKMHQGKKKKQNK) are compositionally biased toward basic residues. The residue at position 729 (S729) is a Phosphoserine. K746 is modified (N6-acetyllysine). Positions 752–877 (ETLEVGDCVS…QDYARFESPP (126 aa)) constitute a BAH 1 domain. The residue at position 875 (S875) is a Phosphoserine. K888, K954, K958, K972, and K1051 each carry N6-acetyllysine. Residues 969 to 1097 (HYRKYSDYIK…AKSKSFEDPP (129 aa)) enclose the BAH 2 domain. The interval 1091–1126 (KSFEDPPNHARSTGNKGKGKGKGKNRTKSQTCEPSE) is disordered. Tandem repeats lie at residues 1106–1107 (KG), 1108–1109 (KG), 1110–1111 (KG), and 1112–1113 (KG). Residues 1106–1115 (KGKGKGKGKN) are 5 X 2 AA tandem repeats of K-G. Over residues 1107–1117 (GKGKGKGKNRT) the composition is skewed to basic residues. N6-acetyllysine occurs at positions 1108, 1110, 1112, 1114, and 1118. One copy of the 5; approximate repeat lies at 1114–1115 (KN). The interaction with the PRC2/EED-EZH2 complex stretch occupies residues 1118-1611 (KSQTCEPSEL…AKIKEEAAKD (494 aa)). Positions 1136 to 1595 (LRTLDVFSGC…LEIKRCMLAK (460 aa)) constitute an SAM-dependent MTase C5-type domain. The interval 1136–1611 (LRTLDVFSGC…AKIKEEAAKD (476 aa)) is catalytic. S-adenosyl-L-methionine contacts are provided by residues S1143, 1147–1148 (GL), 1165–1166 (EM), 1187–1188 (DC), and C1188. Residue C1223 is part of the active site. 2 positions are modified to N6-acetyllysine: K1346 and K1412. Positions 1574 and 1576 each coordinate S-adenosyl-L-methionine. K1605 participates in a covalent cross-link: Glycyl lysine isopeptide (Lys-Gly) (interchain with G-Cter in SUMO2).

The protein belongs to the class I-like SAM-binding methyltransferase superfamily. C5-methyltransferase family. Homodimer. Forms a stable complex with E2F1, BB1 and HDAC1. Forms a complex with DMAP1 and HDAC2, with direct interaction. Interacts with the PRC2/EED-EZH2 complex. Probably part of a corepressor complex containing ZNF304, TRIM28, SETDB1 and DNMT1. Interacts with UHRF1; promoting its recruitment to hemimethylated DNA. Interacts with USP7, promoting its deubiquitination. Interacts with PCNA. Interacts with MBD2 and MBD3. Interacts with DNMT3A and DNMT3B. Interacts with UBC9. Interacts with CSNK1D. Interacts with HDAC1. Interacts with BAZ2A/TIP5. Interacts with SIRT7. Interacts with ZNF263; recruited to the SIX3 promoter along with other proteins involved in chromatin modification and transcriptional corepression where it contributes to transcriptional repression. Interacts with L3MBTL3 and DCAF5; the interaction requires DNMT1 methylation at Lys-142 and is necessary to target DNMT1 for ubiquitination by the CRL4-DCAF5 E3 ubiquitin ligase complex and proteasomal degradation. Interacts with PHF20L1; the interaction requires DNMT1 methylation at Lys-142 and protects DNMT1 from ubiquitination and proteasomal degradation. Sumoylated; sumoylation increases activity. In terms of processing, acetylation on multiple lysines, mainly by KAT2B/PCAF, regulates cell cycle G(2)/M transition. Deacetylation of Lys-1346 and Lys-1412 by SIRT1 increases methyltransferase activity. Post-translationally, phosphorylation of Ser-154 by CDKs is important for enzymatic activity and protein stability. Phosphorylation of Ser-143 by AKT1 prevents methylation by SETD7 thereby increasing DNMT1 stability. Methylation at Lys-142 by SETD7 is necessary for the regulation of DNMT1 proteasomal degradation. In terms of processing, ubiquitinated by UHRF1; interaction with USP7 counteracts ubiquitination by UHRF1 by promoting deubiquitination and preventing degradation by the proteasome.

Its subcellular location is the nucleus. It carries out the reaction a 2'-deoxycytidine in DNA + S-adenosyl-L-methionine = a 5-methyl-2'-deoxycytidine in DNA + S-adenosyl-L-homocysteine + H(+). Methylates CpG residues. Preferentially methylates hemimethylated DNA. Associates with DNA replication sites in S phase maintaining the methylation pattern in the newly synthesized strand, that is essential for epigenetic inheritance. Associates with chromatin during G2 and M phases to maintain DNA methylation independently of replication. It is responsible for maintaining methylation patterns established in development. DNA methylation is coordinated with methylation of histones. Mediates transcriptional repression by direct binding to HDAC2. In association with DNMT3B and via the recruitment of CTCFL/BORIS, involved in activation of BAG1 gene expression by modulating dimethylation of promoter histone H3 at H3K4 and H3K9. Probably forms a corepressor complex required for activated KRAS-mediated promoter hypermethylation and transcriptional silencing of tumor suppressor genes (TSGs) or other tumor-related genes in colorectal cancer (CRC) cells. Also required to maintain a transcriptionally repressive state of genes in undifferentiated embryonic stem cells (ESCs). Associates at promoter regions of tumor suppressor genes (TSGs) leading to their gene silencing. Promotes tumor growth. This is DNA (cytosine-5)-methyltransferase 1 (DNMT1) from Bos taurus (Bovine).